The sequence spans 678 residues: Vacuolar fusion protein mon1 (678 aa).

3 disordered regions span residues 1-116 (MDRD…YTSP), 449-474 (EENN…VTSP), and 568-591 (FETS…KTTE). Positions 10–20 (NDGTNDNNDTT) are enriched in low complexity. Polar residues predominate over residues 63-77 (RPTTQVSTIDISTLS). The span at 87–105 (STSATSATSATSATRSVAS) shows a compositional bias: low complexity. A compositionally biased stretch (polar residues) spans 106–116 (PQSSASGYTSP). Low complexity predominate over residues 450–459 (ENNSNNTNNP). Residues 460–471 (EQPPQPPPPKPV) show a composition bias toward pro residues.

Belongs to the MON1/SAND family.

The protein localises to the endosome. It localises to the multivesicular body membrane. The protein resides in the prevacuolar compartment membrane. Its subcellular location is the vacuole membrane. In complex with CCZ1, is required for multiple vacuole delivery pathways including the cytoplasm to vacuole transport (Cvt), autophagy, pexophagy and endocytosis. The MON1-CCZ1 complex acts at the fusion of vesicles with the vacuole, through its regulation of the SNARE complex during the coordinated priming and docking stages of fusion, and particularly at the stage of tethering/docking. The sequence is that of Vacuolar fusion protein mon1 (apg-13) from Neurospora crassa (strain ATCC 24698 / 74-OR23-1A / CBS 708.71 / DSM 1257 / FGSC 987).